The following is a 76-amino-acid chain: Omega-scoloptoxin(13)-Ssm2a (76 aa).

An N-terminal signal peptide occupies residues 1-22 (MAYIYALIFAIVVCMNTDVIQA).

Contains 4 disulfide bonds. As to expression, expressed by the venom gland.

It is found in the secreted. Functionally, inhibits voltage-gated calcium channel (Cav) currents in DRG neurons (IC(50)=1590 nM). This is Omega-scoloptoxin(13)-Ssm2a from Scolopendra mutilans (Chinese red-headed centipede).